The sequence spans 72 residues: UPF0729 protein C18orf32 homolog (72 aa).

Residues 1–33 are necessary for its localzation to the endoplasmic reticulum and lipid droplets; sequence MVCIPCIVIPVLLWIFKKFLEPYIYPVVSRIWP. The disordered stretch occupies residues 45 to 72; sequence TGKVDCKGADTNGFSTKGPTEVSDKKKD.

Belongs to the UPF0729 family. As to quaternary structure, interacts with DERL1 and AMFR. Post-translationally, undergoes ER-associated degradation (ERAD).

It localises to the endoplasmic reticulum. The protein resides in the lipid droplet. Functionally, may activate the NF-kappa-B signaling pathway. This is UPF0729 protein C18orf32 homolog from Rattus norvegicus (Rat).